We begin with the raw amino-acid sequence, 255 residues long: MMTFISCAKTMTGRSKMQTPVTSTPQFQTEAIQNALDMSQFSAEELERLLRVNSKIAAENYMRFQDFCSDSPSALAALLAYTGIVYKRIHPQDFTPEDFQYAQDHLRITSFLYGLLRPLDQIKNYRMEGDIKLPERGGISMFDYWKPILTDTFIKEIKARGGILINLASGEMKDLFDWKRVEQEVQVITPEFQVWKKGKLTTVVVYAKMCRGELTRFIIKNRIENPGDLKGFKWEGFSFDAGHSTDTHYLFSLLS.

This sequence belongs to the UPF0246 family.

The protein is UPF0246 protein BVU_0413 of Phocaeicola vulgatus (strain ATCC 8482 / DSM 1447 / JCM 5826 / CCUG 4940 / NBRC 14291 / NCTC 11154) (Bacteroides vulgatus).